The sequence spans 253 residues: rRNA adenine N-6-methyltransferase (253 aa).

Positions 14, 16, 40, 61, 85, and 101 each coordinate S-adenosyl-L-methionine. Residues Cys-229–Arg-253 are disordered. The segment covering Thr-244–Arg-253 has biased composition (polar residues).

The protein belongs to the class I-like SAM-binding methyltransferase superfamily. rRNA adenine N(6)-methyltransferase family.

Involved in erythromycin resistance. The chain is rRNA adenine N-6-methyltransferase (ermA) from Corynebacterium diphtheriae.